The primary structure comprises 320 residues: Biotin synthase (320 aa).

The Radical SAM core domain maps to 46–275 (NMGRRVDLCS…YAHIRYAGGR (230 aa)). Positions 64, 68, and 71 each coordinate [4Fe-4S] cluster. Residues S108, C140, C200, and R270 each coordinate [2Fe-2S] cluster.

Belongs to the radical SAM superfamily. Biotin synthase family. Homodimer. [4Fe-4S] cluster serves as cofactor. The cofactor is [2Fe-2S] cluster.

The catalysed reaction is (4R,5S)-dethiobiotin + (sulfur carrier)-SH + 2 reduced [2Fe-2S]-[ferredoxin] + 2 S-adenosyl-L-methionine = (sulfur carrier)-H + biotin + 2 5'-deoxyadenosine + 2 L-methionine + 2 oxidized [2Fe-2S]-[ferredoxin]. It participates in cofactor biosynthesis; biotin biosynthesis; biotin from 7,8-diaminononanoate: step 2/2. Functionally, catalyzes the conversion of dethiobiotin (DTB) to biotin by the insertion of a sulfur atom into dethiobiotin via a radical-based mechanism. In Acetivibrio thermocellus (strain ATCC 27405 / DSM 1237 / JCM 9322 / NBRC 103400 / NCIMB 10682 / NRRL B-4536 / VPI 7372) (Clostridium thermocellum), this protein is Biotin synthase.